We begin with the raw amino-acid sequence, 390 residues long: Manganese peroxidase 2 (390 aa).

The first 23 residues, 1 to 23 (MAFNFAAILAFVSLAAVTSAAPS), serve as a signal peptide directing secretion. 5 cysteine pairs are disulfide-bonded: C27/C39, C38/C313, C57/C141, C277/C343, and C365/C372. Mn(2+) is bound by residues E59 and E63. The active-site Proton acceptor is the H70. 4 residues coordinate Ca(2+): D71, G86, D88, and S90. N155 carries N-linked (GlcNAc...) asparagine glycosylation. A heme b-binding site is contributed by H197. Ca(2+) is bound at residue S198. Residue D203 participates in Mn(2+) binding. Positions 215, 217, and 222 each coordinate Ca(2+). N-linked (GlcNAc...) asparagine glycosylation occurs at N241.

This sequence belongs to the peroxidase family. Ligninase subfamily. Requires heme b as cofactor. It depends on Ca(2+) as a cofactor.

The protein resides in the secreted. It catalyses the reaction 2 Mn(2+) + H2O2 + 2 H(+) = 2 Mn(3+) + 2 H2O. Functionally, catalyzes the oxidation of Mn(2+) to Mn(3+). The latter, acting as a diffusible redox mediator, is capable of oxidizing a variety of lignin compounds. The sequence is that of Manganese peroxidase 2 (mnp2) from Phlebia radiata (White-rot fungus).